Consider the following 334-residue polypeptide: Leukocyte cell-derived chemotaxin 1 (334 aa).

The chain crosses the membrane as a helical span at residues 45 to 65 (VVLISGAVLLLFGAIGAFYFW). One can recognise a BRICHOS domain in the interval 104 to 201 (GSGAEEAIAV…LCGDLPIFWL (98 aa)). Cys131 and Cys193 form a disulfide bridge. The propeptide occupies 211-214 (RERR). The disordered stretch occupies residues 218 to 268 (RKIVPTTTKRPHSGPRSNPGAGRLNNETRPSVQEDSQAFNPDNPYHQQEGE). Polar residues predominate over residues 242-257 (NNETRPSVQEDSQAFN). N-linked (GlcNAc...) asparagine glycosylation occurs at Asn243. 4 disulfides stabilise this stretch: Cys282–Cys286, Cys283–Cys323, Cys293–Cys317, and Cys297–Cys313.

This sequence belongs to the chondromodulin-1 family. After cleavage, the post-translationally modified ChM-I is secreted as a glycoprotein. In terms of tissue distribution, detected in cartilage and cardiac valves (at protein level). Detected in the laminae fibrosa, spongiosa and ventricularis layers of normal cardiac valves (at protein level). Expression is decreased cardiac valves of patients with valvular heart disease (at protein level). Weakly expressed in chondrosarcoma.

The protein localises to the secreted. Its subcellular location is the extracellular space. It is found in the extracellular matrix. It localises to the endomembrane system. In terms of biological role, bifunctional growth regulator that stimulates the growth of cultured chondrocytes in the presence of basic fibroblast growth factor (FGF) but inhibits the growth of cultured vascular endothelial cells. May contribute to the rapid growth of cartilage and vascular invasion prior to the replacement of cartilage by bone during endochondral bone development. Inhibits in vitro tube formation and mobilization of endothelial cells. Plays a role as antiangiogenic factor in cardiac valves to suppress neovascularization. The sequence is that of Leukocyte cell-derived chemotaxin 1 from Homo sapiens (Human).